The following is an 88-amino-acid chain: Exodeoxyribonuclease 7 small subunit (88 aa).

The tract at residues 68-88 (SDPMHPDDGEPFDPSLVSTSQ) is disordered.

The protein belongs to the XseB family. In terms of assembly, heterooligomer composed of large and small subunits.

The protein localises to the cytoplasm. It carries out the reaction Exonucleolytic cleavage in either 5'- to 3'- or 3'- to 5'-direction to yield nucleoside 5'-phosphates.. Bidirectionally degrades single-stranded DNA into large acid-insoluble oligonucleotides, which are then degraded further into small acid-soluble oligonucleotides. This Xylella fastidiosa (strain 9a5c) protein is Exodeoxyribonuclease 7 small subunit.